The chain runs to 182 residues: MGDEEKRNRAITARRQHLKSVMLQIAATELEKEEGRREAEKQNYLAEHCPPLSLPGSMAEVQELCKQLHAKIDAAEEEKYDMEIKVQKSSKELEDMNQKLFDLRGKFKRPPLRRVRMSADAMLKALLGSKHKVCMDLRANLKQVKKEDTEKERDLRDVGDWRKNIEEKSGMEGRKKMFESES.

Gly2 is subject to N-acetylglycine. The segment at 2-48 is involved in binding TNC; sequence GDEEKRNRAITARRQHLKSVMLQIAATELEKEEGRREAEKQNYLAEH. At Thr12 the chain carries Phosphothreonine; by PHK. The segment at 97–117 is involved in binding TNC and actin; the sequence is NQKLFDLRGKFKRPPLRRVRM. The residue at position 118 (Ser118) is a Phosphoserine; by PKA.

Belongs to the troponin I family. Binds to actin and tropomyosin.

Functionally, troponin I is the inhibitory subunit of troponin, the thin filament regulatory complex which confers calcium-sensitivity to striated muscle actomyosin ATPase activity. This chain is Troponin I, fast skeletal muscle (TNNI2), found in Oryctolagus cuniculus (Rabbit).